A 410-amino-acid chain; its full sequence is Peptidase T (410 aa).

His79 is a binding site for Zn(2+). Asp81 is a catalytic residue. Asp142 serves as a coordination point for Zn(2+). Glu176 serves as the catalytic Proton acceptor. Zn(2+) is bound by residues Glu177, Asp199, and His381.

The protein belongs to the peptidase M20B family. It depends on Zn(2+) as a cofactor.

The protein localises to the cytoplasm. The catalysed reaction is Release of the N-terminal residue from a tripeptide.. Its function is as follows. Cleaves the N-terminal amino acid of tripeptides. This chain is Peptidase T, found in Bacillus licheniformis (strain ATCC 14580 / DSM 13 / JCM 2505 / CCUG 7422 / NBRC 12200 / NCIMB 9375 / NCTC 10341 / NRRL NRS-1264 / Gibson 46).